We begin with the raw amino-acid sequence, 283 residues long: ATP synthase gamma chain (283 aa).

The protein belongs to the ATPase gamma chain family. In terms of assembly, F-type ATPases have 2 components, CF(1) - the catalytic core - and CF(0) - the membrane proton channel. CF(1) has five subunits: alpha(3), beta(3), gamma(1), delta(1), epsilon(1). CF(0) has three main subunits: a, b and c.

Its subcellular location is the cell membrane. In terms of biological role, produces ATP from ADP in the presence of a proton gradient across the membrane. The gamma chain is believed to be important in regulating ATPase activity and the flow of protons through the CF(0) complex. The chain is ATP synthase gamma chain from Exiguobacterium sibiricum (strain DSM 17290 / CCUG 55495 / CIP 109462 / JCM 13490 / 255-15).